A 714-amino-acid chain; its full sequence is Calpain-1 catalytic subunit (714 aa).

The Calpain catalytic domain maps to 55-354; the sequence is LFRDEAFPPV…FTRLEICNLT (300 aa). 2 residues coordinate Ca(2+): Q109 and D114. Catalysis depends on residues C115, H272, and N296. The Ca(2+) site is built by N316, D318, and D323. T354 carries the post-translational modification Phosphothreonine. The segment at 355–526 is domain III; it reads PDALKSRTIR…KSAGTAELDD (172 aa). The interval 527–542 is linker; the sequence is QIQANLPDEQVLSEEE. EF-hand domains are found at residues 541 to 576, 585 to 618, 615 to 650, and 680 to 714; these read EEID…IISK, FSLE…NRIR, NRIR…AGFK, and VRLE…TMFA. The tract at residues 543 to 713 is domain IV; that stretch reads IDENFKALFR…LFKWLQLTMF (171 aa). 10 residues coordinate Ca(2+): D598, D600, N602, K604, E609, D628, D630, S632, S634, and E639.

It belongs to the peptidase C2 family. As to quaternary structure, forms a heterodimer with a small (regulatory) subunit CAPNS1. Ca(2+) serves as cofactor. In terms of processing, undergoes calcium-induced successive autoproteolytic cleavages that generate a membrane-bound 78 kDa active form and an intracellular 75 kDa active form. Calpastatin reduces with high efficiency the transition from 78 kDa to 75 kDa calpain forms.

Its subcellular location is the cytoplasm. The protein resides in the cell membrane. It catalyses the reaction Broad endopeptidase specificity.. Activated by micromolar concentrations of calcium and inhibited by calpastatin. In terms of biological role, calcium-regulated non-lysosomal thiol-protease which catalyzes limited proteolysis of substrates involved in cytoskeletal remodeling and signal transduction. Proteolytically cleaves CTBP1. Cleaves and activates caspase-7 (CASP7). The sequence is that of Calpain-1 catalytic subunit from Pongo abelii (Sumatran orangutan).